A 185-amino-acid polypeptide reads, in one-letter code: Small ribosomal subunit protein bS6 (185 aa).

Residues 115–141 show a composition bias toward basic and acidic residues; it reads AAQKAAAEKAEAARLEAEKAAEEEAAK. A disordered region spans residues 115-185; the sequence is AAQKAAAEKA…EEPKSDEEDA (71 aa). The span at 142-169 shows a compositional bias: low complexity; it reads AAEAQAKEAPAAEAPAEEAPAAEAPAEA. Residues 170 to 185 show a composition bias toward acidic residues; the sequence is PAEEPAEEPKSDEEDA.

Belongs to the bacterial ribosomal protein bS6 family.

Functionally, binds together with bS18 to 16S ribosomal RNA. This Desulfatibacillum aliphaticivorans protein is Small ribosomal subunit protein bS6.